A 168-amino-acid polypeptide reads, in one-letter code: RxLR effector protein CRE8 (168 aa).

The N-terminal stretch at 1 to 23 (MRLPSILVVAASTLFLHYGYTSA) is a signal peptide. Positions 54–69 (RFLRDGKIAEGDNEER) match the RxLR-dEER motif.

The protein belongs to the RxLR effector family.

The protein resides in the secreted. The protein localises to the host cell. Its function is as follows. Effector that is involved in host plant infection. Contributes to virulence during the early infection stage, by inhibiting plant defense responses induced by both PAMP-triggered immunity (PTI) and effector-triggered immunity (ETI). This chain is RxLR effector protein CRE8, found in Phytophthora infestans (strain T30-4) (Potato late blight agent).